The sequence spans 560 residues: Phenol regulator MopR (560 aa).

The phenol site is built by histidine 106 and tryptophan 134. Residues cysteine 155, glutamate 178, cysteine 181, and cysteine 189 each contribute to the Zn(2+) site. One can recognise a Sigma-54 factor interaction domain in the interval 245–474; that stretch reads AVGESVAYRK…LENLLERATL (230 aa). ATP is bound by residues 273–280 and 336–345; these read GETGVGKE and AHGGTIFLDE.

As to quaternary structure, homodimer.

With respect to regulation, activity is triggered by phenol binding. Its function is as follows. Involved in the regulation of the phenol degradation pathway. Activates phenol hydroxylase expression in the presence of phenol. This Acinetobacter guillouiae (Acinetobacter genomosp. 11) protein is Phenol regulator MopR.